The following is a 267-amino-acid chain: Trehalose-phosphate phosphatase (267 aa).

Residue aspartate 20 is the Nucleophile of the active site. Mg(2+) contacts are provided by aspartate 20, aspartate 22, and aspartate 198. 20 to 22 lines the substrate pocket; sequence DLD.

The protein belongs to the trehalose phosphatase family. Requires Mg(2+) as cofactor.

It catalyses the reaction alpha,alpha-trehalose 6-phosphate + H2O = alpha,alpha-trehalose + phosphate. The protein operates within glycan biosynthesis; trehalose biosynthesis. Functionally, removes the phosphate from trehalose 6-phosphate to produce free trehalose. The protein is Trehalose-phosphate phosphatase (otsB) of Salmonella typhimurium (strain LT2 / SGSC1412 / ATCC 700720).